The primary structure comprises 110 residues: UPF0473 protein SSP1146 (110 aa).

Belongs to the UPF0473 family.

In Staphylococcus saprophyticus subsp. saprophyticus (strain ATCC 15305 / DSM 20229 / NCIMB 8711 / NCTC 7292 / S-41), this protein is UPF0473 protein SSP1146.